We begin with the raw amino-acid sequence, 272 residues long: MICOS complex subunit MIC27 (272 aa).

The N-terminal 24 residues, 1–24, are a transit peptide targeting the mitochondrion; sequence MAAKVARLAAAASSLPFVCAVYAE. Residues 28–107 lie on the Mitochondrial intermembrane side of the membrane; the sequence is SKSQLVKPKQ…YVYLKNPPPD (80 aa). A helical membrane pass occupies residues 108 to 126; that stretch reads FLPRVGIITISGLAGVVLA. The Mitochondrial matrix segment spans residues 127 to 134; sequence RKDSRFKK. The helical transmembrane segment at 135-152 threads the bilayer; that stretch reads IAYPLGLTTLGISVCYPA. The Mitochondrial intermembrane segment spans residues 153–272; it reads QAVVIAKITG…EDVDMYSTRS (120 aa). A disordered region spans residues 187 to 272; the sequence is SKLQQESKSV…EDVDMYSTRS (86 aa). Polar residues-rich tracts occupy residues 188–198 and 206–245; these read KLQQESKSVTQ and ISNV…TVKT.

This sequence belongs to the apolipoprotein O/MICOS complex subunit Mic27 family. In terms of assembly, component of the mitochondrial contact site and cristae organizing system (MICOS) complex (also known as MINOS or MitOS complex).

It localises to the mitochondrion inner membrane. Its function is as follows. Component of the MICOS complex, a large protein complex of the mitochondrial inner membrane that plays crucial roles in the maintenance of crista junctions, inner membrane architecture, and formation of contact sites to the outer membrane. This chain is MICOS complex subunit MIC27 (APOOL), found in Gallus gallus (Chicken).